The sequence spans 184 residues: Large ribosomal subunit protein uL6 (184 aa).

It belongs to the universal ribosomal protein uL6 family. Part of the 50S ribosomal subunit.

In terms of biological role, this protein binds to the 23S rRNA, and is important in its secondary structure. It is located near the subunit interface in the base of the L7/L12 stalk, and near the tRNA binding site of the peptidyltransferase center. In Thermococcus onnurineus (strain NA1), this protein is Large ribosomal subunit protein uL6.